A 154-amino-acid chain; its full sequence is Transcriptional repressor NrdR (154 aa).

A zinc finger spans residues 3–34; the sequence is CPTCKYNGTRVVDSRPADDGNSIRRRRECEKC. The ATP-cone domain maps to 49-139; the sequence is LIVVKKDGAR…VYRQFKDISV (91 aa).

This sequence belongs to the NrdR family. Zn(2+) serves as cofactor.

In terms of biological role, negatively regulates transcription of bacterial ribonucleotide reductase nrd genes and operons by binding to NrdR-boxes. This is Transcriptional repressor NrdR from Listeria welshimeri serovar 6b (strain ATCC 35897 / DSM 20650 / CCUG 15529 / CIP 8149 / NCTC 11857 / SLCC 5334 / V8).